A 949-amino-acid chain; its full sequence is uncharacterized protein (949 aa).

In terms of domain architecture, Calponin-homology (CH) spans 64–170 (LCSVHEAKKW…YCLHALSYLL (107 aa)).

Its subcellular location is the nucleus. This is an uncharacterized protein from Schizosaccharomyces pombe (strain 972 / ATCC 24843) (Fission yeast).